The chain runs to 199 residues: MKAIILAGGHSVRFGKPKAFAEVNGETFYSRVIKTLESTNMFNEIIISTNAQLATQFKYPNVVIDDENHNDKGPLAGIYTIMKQHPEEELFFVVSVDTPMITGKAVSTLYQFLVSHLIENHLDVAAFKEDGRFIPTIAFYSPNALGAITKALHSDNYSFKNIYHELSTDYLDVRDVDAPSYWYKNINYQHDLDALIQKL.

Residues 6–8 (LAG), Lys18, Asp65, and Asp97 contribute to the GTP site. Residue Asp97 participates in Mg(2+) binding.

This sequence belongs to the MobA family. Mg(2+) serves as cofactor.

The protein resides in the cytoplasm. It catalyses the reaction Mo-molybdopterin + GTP + H(+) = Mo-molybdopterin guanine dinucleotide + diphosphate. In terms of biological role, transfers a GMP moiety from GTP to Mo-molybdopterin (Mo-MPT) cofactor (Moco or molybdenum cofactor) to form Mo-molybdopterin guanine dinucleotide (Mo-MGD) cofactor. The protein is Probable molybdenum cofactor guanylyltransferase of Staphylococcus aureus (strain Mu50 / ATCC 700699).